The primary structure comprises 469 residues: D-3-phosphoglycerate dehydrogenase 2 (469 aa).

An N-acetylserine modification is found at Ser-2. 3 positions are modified to phosphoserine: Ser-22, Ser-29, and Ser-33. Residues 208 to 209 (HI), Asp-228, 285 to 287 (ASR), and Asp-311 contribute to the NAD(+) site. Arg-287 is an active-site residue. Glu-316 is an active-site residue. His-347 functions as the Proton donor in the catalytic mechanism. Residue 347 to 350 (HIGG) coordinates NAD(+). The ACT domain occupies 399-469 (RVLYIHRNVP…SAKVSIRLLY (71 aa)).

This sequence belongs to the D-isomer specific 2-hydroxyacid dehydrogenase family.

It catalyses the reaction (2R)-3-phosphoglycerate + NAD(+) = 3-phosphooxypyruvate + NADH + H(+). It carries out the reaction (R)-2-hydroxyglutarate + NAD(+) = 2-oxoglutarate + NADH + H(+). The protein operates within amino-acid biosynthesis; L-serine biosynthesis; L-serine from 3-phospho-D-glycerate: step 1/3. Its function is as follows. Catalyzes the reversible oxidation of 3-phospho-D-glycerate to 3-phosphonooxypyruvate, the first step of the phosphorylated L-serine biosynthesis pathway. Also catalyzes the reversible oxidation of 2-hydroxyglutarate to 2-oxoglutarate. This is D-3-phosphoglycerate dehydrogenase 2 (SER33) from Saccharomyces cerevisiae (strain ATCC 204508 / S288c) (Baker's yeast).